A 442-amino-acid chain; its full sequence is Aspartate--tRNA(Asp/Asn) ligase (442 aa).

Glu172 contributes to the L-aspartate binding site. An aspartate region spans residues Gln194–Lys197. Arg216 serves as a coordination point for L-aspartate. ATP is bound by residues Arg216–Glu218, Arg224–Leu226, and Glu365. Mg(2+) is bound by residues Glu365 and Thr368. 2 residues coordinate L-aspartate: Thr368 and Arg372. ATP is bound at residue Gly413–Arg416.

Belongs to the class-II aminoacyl-tRNA synthetase family. Type 2 subfamily. Homodimer. The cofactor is Mg(2+).

Its subcellular location is the cytoplasm. The catalysed reaction is tRNA(Asx) + L-aspartate + ATP = L-aspartyl-tRNA(Asx) + AMP + diphosphate. Its function is as follows. Aspartyl-tRNA synthetase with relaxed tRNA specificity since it is able to aspartylate not only its cognate tRNA(Asp) but also tRNA(Asn). Reaction proceeds in two steps: L-aspartate is first activated by ATP to form Asp-AMP and then transferred to the acceptor end of tRNA(Asp/Asn). This chain is Aspartate--tRNA(Asp/Asn) ligase (aspS), found in Aeropyrum pernix (strain ATCC 700893 / DSM 11879 / JCM 9820 / NBRC 100138 / K1).